The chain runs to 104 residues: MFAVVKASGFQRLVEVGSVISIDPTNVDSGGFVHLPVLLLVDGAEVVSDPDKLRLARVSAKFLRKLRGPKVRIHKFKNKTGYHKRQGHRQGVYVFSVTSIERGD.

Belongs to the bacterial ribosomal protein bL21 family. Part of the 50S ribosomal subunit. Contacts protein L20.

Functionally, this protein binds to 23S rRNA in the presence of protein L20. The polypeptide is Large ribosomal subunit protein bL21 (Tropheryma whipplei (strain TW08/27) (Whipple's bacillus)).